The sequence spans 126 residues: MPEPAKSAPAPKKGSKKAVTKAQKKDGRKRKRSRKESYSVYVYKVLKQVHPDTGISSKAMGIMNSFVNDIFERIAGEASRLPHYNKRSTITSREIQTAVRLLLPGELAKHAVSEGTKAVTKYTSAK.

Over residues M1 to K12 the composition is skewed to low complexity. Residues M1 to E36 form a disordered region. P2 carries the post-translational modification N-acetylproline. Position 3 is an ADP-ribosyl glutamic acid (E3). K6 bears the N6-(2-hydroxyisobutyryl)lysine; alternate mark. K6 bears the N6-(beta-hydroxybutyryl)lysine; alternate mark. At K6 the chain carries N6-acetyllysine; alternate. K6 carries the N6-butyryllysine; alternate modification. K6 is modified (N6-crotonyllysine; alternate). K6 bears the N6-lactoyllysine; alternate mark. Residue K6 forms a Glycyl lysine isopeptide (Lys-Gly) (interchain with G-Cter in SUMO2); alternate linkage. S7 bears the ADP-ribosylserine mark. K12 carries the N6-(beta-hydroxybutyryl)lysine; alternate modification. N6-acetyllysine; alternate occurs at positions 12 and 13. N6-crotonyllysine; alternate occurs at positions 12 and 13. K12 carries the post-translational modification N6-lactoyllysine; alternate. The residue at position 13 (K13) is an N6-(2-hydroxyisobutyryl)lysine; alternate. S15 carries the phosphoserine; by STK4/MST1 modification. N6-acetyllysine; alternate occurs at positions 16, 17, 21, and 24. N6-crotonyllysine; alternate is present on residues K16, K17, K21, and K24. An N6-lactoyllysine; alternate mark is found at K16, K17, K21, and K24. An N6-(beta-hydroxybutyryl)lysine; alternate mark is found at K17 and K21. An N6-glutaryllysine; alternate modification is found at K17. 2 positions are modified to N6-(2-hydroxyisobutyryl)lysine; alternate: K21 and K24. K21 bears the N6-butyryllysine; alternate mark. K21 is covalently cross-linked (Glycyl lysine isopeptide (Lys-Gly) (interchain with G-Cter in SUMO2); alternate). K25 carries the post-translational modification N6-(2-hydroxyisobutyryl)lysine. An N6-(2-hydroxyisobutyryl)lysine; alternate modification is found at K35. At K35 the chain carries N6-(beta-hydroxybutyryl)lysine; alternate. K35 is subject to N6-crotonyllysine; alternate. An N6-glutaryllysine; alternate modification is found at K35. At K35 the chain carries N6-succinyllysine; alternate. K35 participates in a covalent cross-link: Glycyl lysine isopeptide (Lys-Gly) (interchain with G-Cter in ubiquitin); alternate. E36 bears the PolyADP-ribosyl glutamic acid mark. S37 carries the phosphoserine; by AMPK modification. An N6-(2-hydroxyisobutyryl)lysine; alternate mark is found at K44, K47, and K58. At K44 the chain carries N6-lactoyllysine; alternate. N6-glutaryllysine; alternate occurs at positions 44 and 47. K47 is modified (N6-methyllysine; alternate). Residue K58 is modified to N6,N6-dimethyllysine; alternate. R80 is modified (dimethylated arginine). K86 bears the N6-(2-hydroxyisobutyryl)lysine; alternate mark. K86 bears the N6-(beta-hydroxybutyryl)lysine; alternate mark. Residue K86 is modified to N6-acetyllysine; alternate. Position 86 is an N6-lactoyllysine; alternate (K86). N6,N6,N6-trimethyllysine; alternate is present on K86. Omega-N-methylarginine occurs at positions 87 and 93. An N6-(2-hydroxyisobutyryl)lysine; alternate modification is found at K109. K109 bears the N6-lactoyllysine; alternate mark. K109 is modified (N6-glutaryllysine; alternate). At K109 the chain carries N6-methyllysine; alternate. S113 carries O-linked (GlcNAc) serine glycosylation. T116 is modified (phosphothreonine). N6-(2-hydroxyisobutyryl)lysine; alternate occurs at positions 117 and 121. N6-(beta-hydroxybutyryl)lysine; alternate is present on residues K117 and K121. N6-lactoyllysine; alternate is present on residues K117 and K121. N6-glutaryllysine; alternate occurs at positions 117 and 121. An N6-succinyllysine; alternate mark is found at K117 and K121. An N6-malonyllysine; alternate modification is found at K117. N6-methylated lysine; alternate is present on K117. K121 is covalently cross-linked (Glycyl lysine isopeptide (Lys-Gly) (interchain with G-Cter in ubiquitin); alternate).

The protein belongs to the histone H2B family. In terms of assembly, the nucleosome is a histone octamer containing two molecules each of H2A, H2B, H3 and H4 assembled in one H3-H4 heterotetramer and two H2A-H2B heterodimers. The octamer wraps approximately 147 bp of DNA. Post-translationally, monoubiquitination at Lys-35 (H2BK34Ub) by the MSL1/MSL2 dimer is required for histone H3 'Lys-4' (H3K4me) and 'Lys-79' (H3K79me) methylation and transcription activation at specific gene loci, such as HOXA9 and MEIS1 loci. Similarly, monoubiquitination at Lys-121 (H2BK120Ub) by the RNF20/40 complex gives a specific tag for epigenetic transcriptional activation and is also prerequisite for histone H3 'Lys-4' and 'Lys-79' methylation. It also functions cooperatively with the FACT dimer to stimulate elongation by RNA polymerase II. H2BK120Ub also acts as a regulator of mRNA splicing: deubiquitination by USP49 is required for efficient cotranscriptional splicing of a large set of exons. Phosphorylation at Ser-37 (H2BS36ph) by AMPK in response to stress promotes transcription. Phosphorylated on Ser-15 (H2BS14ph) by STK4/MST1 during apoptosis; which facilitates apoptotic chromatin condensation. Also phosphorylated on Ser-15 in response to DNA double strand breaks (DSBs), and in correlation with somatic hypermutation and immunoglobulin class-switch recombination. In terms of processing, glcNAcylation at Ser-113 promotes monoubiquitination of Lys-121. It fluctuates in response to extracellular glucose, and associates with transcribed genes. Post-translationally, ADP-ribosylated by PARP1 or PARP2 on Ser-7 (H2BS6ADPr) in response to DNA damage. H2BS6ADPr promotes recruitment of CHD1L. Mono-ADP-ribosylated on Glu-3 (H2BE2ADPr) by PARP3 in response to single-strand breaks. Poly ADP-ribosylation on Glu-36 (H2BE35ADPr) by PARP1 regulates adipogenesis: it inhibits phosphorylation at Ser-37 (H2BS36ph), thereby blocking expression of pro-adipogenetic genes. Crotonylation (Kcr) is specifically present in male germ cells and marks testis-specific genes in post-meiotic cells, including X-linked genes that escape sex chromosome inactivation in haploid cells. Crotonylation marks active promoters and enhancers and confers resistance to transcriptional repressors. It is also associated with post-meiotically activated genes on autosomes. In terms of processing, lactylated in macrophages by EP300/P300 by using lactoyl-CoA directly derived from endogenous or exogenous lactate, leading to stimulates gene transcription.

Its subcellular location is the nucleus. It is found in the chromosome. Core component of nucleosome. Nucleosomes wrap and compact DNA into chromatin, limiting DNA accessibility to the cellular machineries which require DNA as a template. Histones thereby play a central role in transcription regulation, DNA repair, DNA replication and chromosomal stability. DNA accessibility is regulated via a complex set of post-translational modifications of histones, also called histone code, and nucleosome remodeling. In terms of biological role, has broad antibacterial activity. May contribute to the formation of the functional antimicrobial barrier of the colonic epithelium, and to the bactericidal activity of amniotic fluid. This Homo sapiens (Human) protein is Histone H2B type F-S.